Reading from the N-terminus, the 1161-residue chain is Mitogen-activated protein kinase kinase kinase (1161 aa).

In terms of domain architecture, SH3 spans 56-120 (GDGSLWTALY…PKDFVTDEDP (65 aa)). The 261-residue stretch at 142–402 (LDIKEVIGSG…KEILKQLESI (261 aa)) folds into the Protein kinase domain. ATP contacts are provided by residues 148-156 (IGSGGFCKV) and Lys-169. Asp-264 acts as the Proton acceptor in catalysis. A Phosphothreonine; by autocatalysis modification is found at Thr-300. Ser-304 bears the Phosphoserine; by autocatalysis mark. 2 leucine-zipper regions span residues 426–447 (IAGV…EEQL) and 461–482 (LKIR…ELVM). A phosphoserine mark is found at Ser-525 and Ser-560. Disordered stretches follow at residues 560-615 (SQLS…GSGG) and 658-678 (TTNN…NQLN). Positions 571–583 (AQTSTHSSFSKSA) are enriched in polar residues. Residues 591–601 (QQQNQQQVASL) are compositionally biased toward low complexity. Phosphoserine occurs at positions 685, 773, and 792. The disordered stretch occupies residues 790-830 (GNSPAVGRKKHSLDSSSHHPPANGSNSFALPNQLTLPSEDN). Positions 812–830 (NGSNSFALPNQLTLPSEDN) are enriched in polar residues. Thr-862 is subject to Phosphothreonine. 3 disordered regions span residues 988–1014 (RSAS…EAVN), 1045–1093 (EQRQ…SAGS), and 1137–1161 (GGSS…LERC). Residues 989-1010 (SASPSLSSSSTTASASPSIAST) are compositionally biased toward low complexity. Ser-993 carries the post-translational modification Phosphoserine. Residues 1052-1063 (NQKKQRPKHITK) are compositionally biased toward basic residues. A compositionally biased stretch (basic and acidic residues) spans 1073 to 1086 (GQHHEHDDHNDPQH). Residues 1150 to 1161 (PQTQSCEQLERC) show a composition bias toward polar residues.

Belongs to the protein kinase superfamily. STE Ser/Thr protein kinase family. MAP kinase kinase kinase subfamily. In terms of assembly, homodimer. Requires Mg(2+) as cofactor. Autophosphorylation on serine and threonine residues within the activation loop plays a role in enzyme activation. In terms of tissue distribution, expressed both maternally and zygotically. Expressed uniformly in large quantities in the early embryo (stages 1-4). In the late embryo, expression is ubiquitous, but expression levels are dramatically reduced. Expressed in the adult head and thorax, and in S2 cells.

It carries out the reaction L-seryl-[protein] + ATP = O-phospho-L-seryl-[protein] + ADP + H(+). The catalysed reaction is L-threonyl-[protein] + ATP = O-phospho-L-threonyl-[protein] + ADP + H(+). With respect to regulation, homodimerization via the leucine zipper domains is required for autophosphorylation and subsequent activation. Activated by C6-ceramide. Activates the JUN N-terminal pathway during dorsal closure. In Drosophila melanogaster (Fruit fly), this protein is Mitogen-activated protein kinase kinase kinase.